Consider the following 370-residue polypeptide: Phosphate acyltransferase (370 aa).

It belongs to the PlsX family. In terms of assembly, homodimer. Probably interacts with PlsY.

Its subcellular location is the cytoplasm. It carries out the reaction a fatty acyl-[ACP] + phosphate = an acyl phosphate + holo-[ACP]. It participates in lipid metabolism; phospholipid metabolism. In terms of biological role, catalyzes the reversible formation of acyl-phosphate (acyl-PO(4)) from acyl-[acyl-carrier-protein] (acyl-ACP). This enzyme utilizes acyl-ACP as fatty acyl donor, but not acyl-CoA. This chain is Phosphate acyltransferase, found in Paracoccus denitrificans (strain Pd 1222).